The sequence spans 343 residues: Glycerol-3-phosphate dehydrogenase [NAD(P)+] (343 aa).

Positions 11, 12, 32, 33, and 106 each coordinate NADPH. The sn-glycerol 3-phosphate site is built by Lys106, Gly136, and Ser138. Ala140 contacts NADPH. Positions 192, 245, 255, 256, and 257 each coordinate sn-glycerol 3-phosphate. The active-site Proton acceptor is the Lys192. Arg256 contributes to the NADPH binding site. NADPH is bound by residues Val280 and Glu282.

It belongs to the NAD-dependent glycerol-3-phosphate dehydrogenase family.

Its subcellular location is the cytoplasm. The enzyme catalyses sn-glycerol 3-phosphate + NAD(+) = dihydroxyacetone phosphate + NADH + H(+). It catalyses the reaction sn-glycerol 3-phosphate + NADP(+) = dihydroxyacetone phosphate + NADPH + H(+). The protein operates within membrane lipid metabolism; glycerophospholipid metabolism. Catalyzes the reduction of the glycolytic intermediate dihydroxyacetone phosphate (DHAP) to sn-glycerol 3-phosphate (G3P), the key precursor for phospholipid synthesis. The sequence is that of Glycerol-3-phosphate dehydrogenase [NAD(P)+] from Geobacillus thermodenitrificans (strain NG80-2).